The primary structure comprises 447 residues: Argininosuccinate synthase (447 aa).

ATP is bound by residues 17–25 (AFSGGLDTS) and alanine 43. Position 99 (tyrosine 99) interacts with L-citrulline. ATP is bound by residues glycine 129 and threonine 131. Residues threonine 131, asparagine 135, and aspartate 136 each coordinate L-aspartate. Residue asparagine 135 participates in L-citrulline binding. Aspartate 136 contributes to the ATP binding site. The L-citrulline site is built by arginine 139 and serine 192. Aspartate 194 lines the ATP pocket. 3 residues coordinate L-citrulline: threonine 201, glutamate 203, and glutamate 280.

It belongs to the argininosuccinate synthase family. Type 2 subfamily. Homotetramer.

It is found in the cytoplasm. The catalysed reaction is L-citrulline + L-aspartate + ATP = 2-(N(omega)-L-arginino)succinate + AMP + diphosphate + H(+). It participates in amino-acid biosynthesis; L-arginine biosynthesis; L-arginine from L-ornithine and carbamoyl phosphate: step 2/3. The protein is Argininosuccinate synthase of Klebsiella pneumoniae subsp. pneumoniae (strain ATCC 700721 / MGH 78578).